Reading from the N-terminus, the 199-residue chain is Transmembrane protein 9B (199 aa).

The signal sequence occupies residues 1 to 34 (MASLWCGNLLRLGSGLSMSCLALSVLLLAQLTGA). N-linked (GlcNAc...) asparagine glycosylation is present at Asn-61. The helical transmembrane segment at 106-126 (IIIYLSILGLLLLYMVYLTLV) threads the bilayer. 2 positions are modified to phosphoserine: Ser-143 and Ser-190.

The protein belongs to the TMEM9 family. N-glycosylated.

It is found in the lysosome membrane. It localises to the early endosome membrane. Enhances production of pro-inflammatory cytokines induced by TNF, IL1B, and TLR ligands. Has a role in TNF activation of both the NF-kappaB and MAPK pathways. In Mus musculus (Mouse), this protein is Transmembrane protein 9B (Tmem9b).